Consider the following 399-residue polypeptide: S-adenosylmethionine synthase (399 aa).

Residue 136–141 (GTGSAD) participates in ATP binding.

It belongs to the AdoMet synthase 2 family. Requires Mg(2+) as cofactor.

The enzyme catalyses L-methionine + ATP + H2O = S-adenosyl-L-methionine + phosphate + diphosphate. Its pathway is amino-acid biosynthesis; S-adenosyl-L-methionine biosynthesis; S-adenosyl-L-methionine from L-methionine: step 1/1. Catalyzes the formation of S-adenosylmethionine from methionine and ATP. The chain is S-adenosylmethionine synthase from Methanothrix thermoacetophila (strain DSM 6194 / JCM 14653 / NBRC 101360 / PT) (Methanosaeta thermophila).